Reading from the N-terminus, the 933-residue chain is Bifunctional uridylyltransferase/uridylyl-removing enzyme (933 aa).

The uridylyltransferase stretch occupies residues 1–379; sequence MAKISLKLDE…TFQRRKRKLA (379 aa). A uridylyl-removing region spans residues 380–736; the sequence is GTSDFIVDNH…VKTHQFEAVT (357 aa). The HD domain occupies 496–619; that stretch reads VDEHLIRCIG…VQSVERLKLL (124 aa). 2 ACT domains span residues 737–818 and 848–922; these read EITV…EMIE and VIEV…GIAP.

It belongs to the GlnD family. It depends on Mg(2+) as a cofactor.

The catalysed reaction is [protein-PII]-L-tyrosine + UTP = [protein-PII]-uridylyl-L-tyrosine + diphosphate. It carries out the reaction [protein-PII]-uridylyl-L-tyrosine + H2O = [protein-PII]-L-tyrosine + UMP + H(+). Its activity is regulated as follows. Uridylyltransferase (UTase) activity is inhibited by glutamine, while glutamine activates uridylyl-removing (UR) activity. Its function is as follows. Modifies, by uridylylation and deuridylylation, the PII regulatory proteins (GlnB and homologs), in response to the nitrogen status of the cell that GlnD senses through the glutamine level. Under low glutamine levels, catalyzes the conversion of the PII proteins and UTP to PII-UMP and PPi, while under higher glutamine levels, GlnD hydrolyzes PII-UMP to PII and UMP (deuridylylation). Thus, controls uridylylation state and activity of the PII proteins, and plays an important role in the regulation of nitrogen fixation and metabolism. In Mesorhizobium japonicum (strain LMG 29417 / CECT 9101 / MAFF 303099) (Mesorhizobium loti (strain MAFF 303099)), this protein is Bifunctional uridylyltransferase/uridylyl-removing enzyme.